The primary structure comprises 457 residues: Argininosuccinate lyase (457 aa).

Belongs to the lyase 1 family. Argininosuccinate lyase subfamily.

The protein resides in the cytoplasm. The enzyme catalyses 2-(N(omega)-L-arginino)succinate = fumarate + L-arginine. The protein operates within amino-acid biosynthesis; L-arginine biosynthesis; L-arginine from L-ornithine and carbamoyl phosphate: step 3/3. The polypeptide is Argininosuccinate lyase (Histophilus somni (strain 129Pt) (Haemophilus somnus)).